Here is a 343-residue protein sequence, read N- to C-terminus: Trans-enoyl reductase ACTTS2 (343 aa).

An NADP(+)-binding site is contributed by glycine 42–lysine 45. Valine 128 to glutamine 135 is a substrate binding site. NADP(+) contacts are provided by residues serine 162–threonine 165, serine 185–asparagine 188, and tyrosine 203. Substrate is bound at residue glycine 268 to leucine 272. Valine 333–serine 334 lines the NADP(+) pocket.

Belongs to the zinc-containing alcohol dehydrogenase family. Monomer.

It functions in the pathway mycotoxin biosynthesis. Functionally, trans-enoyl reductase; part of the gene clusters that mediate the biosynthesis of the host-selective toxins (HSTs) ACT-toxins responsible for brown spot of tangerine disease by the tangerine pathotype which affects tangerines and mandarins. ACT-toxins consist of three moieties, 9,10-epoxy-8-hydroxy-9-methyl-decatrienoic acid (EDA), valine and a polyketide. ACT-toxin I is toxic to both citrus and pear; toxin II the 5''-deoxy derivative of ACT-toxin I, is highly toxic to pear and slightly toxic to citrus. On cellular level, ACT-toxins affect plasma membrane of susceptible cells and cause a sudden increase in loss of K(+) after a few minutes of toxin treatment. The acyl-CoA ligase ACTT1, the hydrolase ACTT2, the enoyl-CoA hydratases ACTT3 and ACTT6, and the acyl-CoA synthetase ACTT5 are all involved in the biosynthesis of the AK-, AF- and ACT-toxin common 9,10-epoxy-8-hydroxy-9-methyl-decatrienoic acid (EDA) structural moiety. The exact role of each enzyme, and of additional enzymes identified within the AF-toxin clusters have still to be determined. On the other hand, ACTTS1 to ACTTS4 are specific to the tangerine pathotype. The function of ACTTS3 is to elongate the polyketide chain portion of ACT-toxin that is unique to this toxin. The enoyl-reductase ACTTS2 might complement the missing enoyl-reductase (ER) domain in ACTTS3 in the synthesis of the polyketide portion of ACT-toxin. The roles of the nonribosomal peptide synthetases-related proteins ACTTS1 and ACTTS4 have also still not been elucidated. The protein is Trans-enoyl reductase ACTTS2 of Alternaria alternata (Alternaria rot fungus).